The primary structure comprises 161 residues: Cytidylate kinase (161 aa).

7–15 provides a ligand contact to ATP; it reads GLAGTGTTT.

Belongs to the cytidylate kinase family. Type 2 subfamily.

It localises to the cytoplasm. It carries out the reaction CMP + ATP = CDP + ADP. The enzyme catalyses dCMP + ATP = dCDP + ADP. In Methanothermobacter thermautotrophicus (strain ATCC 29096 / DSM 1053 / JCM 10044 / NBRC 100330 / Delta H) (Methanobacterium thermoautotrophicum), this protein is Cytidylate kinase (cmk).